Consider the following 489-residue polypeptide: Aerolysin (489 aa).

Positions 1–24 (MMNRIITANLANLASSLMLAQVLG) are cleaved as a signal peptide. 2 disulfide bridges follow: cysteine 44/cysteine 100 and cysteine 184/cysteine 189. Residues 70–86 (WQITGLADRWVIMGPGY) are interaction with host N-linked glycan. The interval 257 to 289 (YSLSEKVTTKNKFQWPLVGETELAIEIAASQSW) is part of the transmembrane beta-barrel after proteolytic activation of the toxin and insertion into the host membrane. Positions 347-356 (RWGGNAWYTH) are interaction with glycans from host GPI-anchor. A propeptide spanning residues 445–489 (TRSAKAAQLRSASAEEVALTSVDLDSEALANEGFGNVSLTIVPVQ) is cleaved from the precursor.

It belongs to the aerolysin family. Homodimer in solution; homoheptamer in the host membrane. After binding to GPI-anchored proteins in target membranes and proteolytic removal of the C-terminal propeptide, the protein assembles into a heptameric pre-pore complex. A further conformation change leads to insertion into the host membrane. Post-translationally, proteolytic cleavage and subsequent release of the propeptide trigger a major conformation change, leading to the formation of a heptameric pre-pore that then inserts into the host membrane.

The protein localises to the secreted. It is found in the host cell membrane. Functionally, secreted, cytolytic toxin that forms pores in host membranes after proteolytic removal of a C-terminal propeptide, leading to destruction of the membrane permeability barrier and cell death. The pores are formed by transmembrane beta-strands and are approximately 3 nm in diameter. This chain is Aerolysin (ash3), found in Aeromonas salmonicida.